The primary structure comprises 334 residues: Holliday junction branch migration complex subunit RuvB (334 aa).

The interval 1–182 is large ATPase domain (RuvB-L); it reads MDERLVSSEA…FGVMSRLEYY (182 aa). ATP-binding positions include Leu-21, Arg-22, Gly-63, Lys-66, Thr-67, Thr-68, 129–131, Arg-172, Tyr-182, and Arg-219; that span reads EDF. Thr-67 is a Mg(2+) binding site. Residues 183–253 form a small ATPAse domain (RuvB-S) region; the sequence is TQEELADIVT…ISQNALERLQ (71 aa). The head domain (RuvB-H) stretch occupies residues 256–334; that stretch reads RLGLDHIDHK…HFQMEAPRYD (79 aa). Arg-311 and Arg-316 together coordinate DNA.

The protein belongs to the RuvB family. In terms of assembly, homohexamer. Forms an RuvA(8)-RuvB(12)-Holliday junction (HJ) complex. HJ DNA is sandwiched between 2 RuvA tetramers; dsDNA enters through RuvA and exits via RuvB. An RuvB hexamer assembles on each DNA strand where it exits the tetramer. Each RuvB hexamer is contacted by two RuvA subunits (via domain III) on 2 adjacent RuvB subunits; this complex drives branch migration. In the full resolvosome a probable DNA-RuvA(4)-RuvB(12)-RuvC(2) complex forms which resolves the HJ. Homohexamer which interacts with RecU.

Its subcellular location is the cytoplasm. The catalysed reaction is ATP + H2O = ADP + phosphate + H(+). The RuvA-RuvB-RuvC complex processes Holliday junction (HJ) DNA during genetic recombination and DNA repair, while the RuvA-RuvB complex plays an important role in the rescue of blocked DNA replication forks via replication fork reversal (RFR). RuvA specifically binds to HJ cruciform DNA, conferring on it an open structure. The RuvB hexamer acts as an ATP-dependent pump, pulling dsDNA into and through the RuvAB complex. RuvB forms 2 homohexamers on either side of HJ DNA bound by 1 or 2 RuvA tetramers; 4 subunits per hexamer contact DNA at a time. Coordinated motions by a converter formed by DNA-disengaged RuvB subunits stimulates ATP hydrolysis and nucleotide exchange. Immobilization of the converter enables RuvB to convert the ATP-contained energy into a lever motion, pulling 2 nucleotides of DNA out of the RuvA tetramer per ATP hydrolyzed, thus driving DNA branch migration. The RuvB motors rotate together with the DNA substrate, which together with the progressing nucleotide cycle form the mechanistic basis for DNA recombination by continuous HJ branch migration. Branch migration allows RuvC to scan DNA until it finds its consensus sequence, where it cleaves and resolves cruciform DNA. In Bacillus subtilis (strain 168), this protein is Holliday junction branch migration complex subunit RuvB.